A 214-amino-acid chain; its full sequence is Adenylate kinase (214 aa).

Position 15–20 (15–20) interacts with ATP; sequence GAGKGT. Positions 35–64 are NMP; sequence ASGDLFREAIKNQSVIGRKIAAIISQGGYV. AMP contacts are provided by residues serine 36, arginine 41, 62-64, 90-93, and glutamine 97; these read GYV and GYPR. The LID stretch occupies residues 127–164; it reads NRVICNNCNSVYNLLFQKPLVENSCDQCSAKLVKRSDD. Arginine 128 contacts ATP. The Zn(2+) site is built by cysteine 131 and cysteine 134. ATP is bound at residue 137–138; the sequence is VY. Zn(2+) contacts are provided by cysteine 151 and cysteine 154. AMP-binding residues include arginine 161 and arginine 172. Leucine 200 serves as a coordination point for ATP.

Belongs to the adenylate kinase family. Monomer.

Its subcellular location is the cytoplasm. It carries out the reaction AMP + ATP = 2 ADP. The protein operates within purine metabolism; AMP biosynthesis via salvage pathway; AMP from ADP: step 1/1. In terms of biological role, catalyzes the reversible transfer of the terminal phosphate group between ATP and AMP. Plays an important role in cellular energy homeostasis and in adenine nucleotide metabolism. The sequence is that of Adenylate kinase from Mycoplasma genitalium (strain ATCC 33530 / DSM 19775 / NCTC 10195 / G37) (Mycoplasmoides genitalium).